A 1224-amino-acid chain; its full sequence is Coatomer subunit alpha (1224 aa).

WD repeat units follow at residues Thr-3–Tyr-38, Thr-42–Tyr-80, Arg-84–Trp-122, and Thr-126–Ile-164. Ser-173 is modified (phosphoserine). Thr-185 is subject to Phosphothreonine. WD repeat units follow at residues Ala-195 to Met-234, Glu-241 to Met-278, and Thr-282 to Leu-319. Ser-402 is subject to Phosphoserine. Thr-591 carries the post-translational modification Phosphothreonine. Phosphoserine is present on Ser-895. An Omega-N-methylarginine modification is found at Arg-965. Residue Ser-1193 is modified to Phosphoserine.

In terms of assembly, oligomeric complex that consists of at least the alpha, beta, beta', gamma, delta, epsilon and zeta subunits. Interacts with SCYL1. Interacts with JAGN1. Interacts with TMEM41B. Interacts with SVEP1. Probably interacts with PEX11A. As to expression, uniformly expressed in a wide range of adult and fetal tissues. Xenin is found in gastric, duodenal and jejunal mucosa. Circulates in the blood. Seems to be confined to specific endocrine cells.

The protein resides in the cytoplasm. Its subcellular location is the golgi apparatus membrane. It localises to the cytoplasmic vesicle. It is found in the COPI-coated vesicle membrane. The protein localises to the secreted. Functionally, the coatomer is a cytosolic protein complex that binds to dilysine motifs and reversibly associates with Golgi non-clathrin-coated vesicles, which further mediate biosynthetic protein transport from the ER, via the Golgi up to the trans Golgi network. Coatomer complex is required for budding from Golgi membranes, and is essential for the retrograde Golgi-to-ER transport of dilysine-tagged proteins. In mammals, the coatomer can only be recruited by membranes associated to ADP-ribosylation factors (ARFs), which are small GTP-binding proteins; the complex also influences the Golgi structural integrity, as well as the processing, activity, and endocytic recycling of LDL receptors. Its function is as follows. Xenin stimulates exocrine pancreatic secretion. It inhibits pentagastrin-stimulated secretion of acid, to induce exocrine pancreatic secretion and to affect small and large intestinal motility. In the gut, xenin interacts with the neurotensin receptor. This chain is Coatomer subunit alpha (COPA), found in Homo sapiens (Human).